The following is a 297-amino-acid chain: Succinate dehydrogenase [ubiquinone] iron-sulfur subunit, mitochondrial (297 aa).

The 2Fe-2S ferredoxin-type domain maps to 47–140 (KKFEIYRWNP…SLKVYPLPHM (94 aa)). [2Fe-2S] cluster-binding residues include Cys100, Cys105, Cys108, and Cys120. One can recognise a 4Fe-4S ferredoxin-type domain in the interval 185–215 (DRSKLDGLYECILCACCSTSCPSYWWNAEKY). Residues Cys195, Cys198, and Cys201 each contribute to the [4Fe-4S] cluster site. Cys205 provides a ligand contact to [3Fe-4S] cluster. Trp210 serves as a coordination point for a ubiquinone. [3Fe-4S] cluster-binding residues include Cys252 and Cys258. Position 262 (Cys262) interacts with [4Fe-4S] cluster.

Belongs to the succinate dehydrogenase/fumarate reductase iron-sulfur protein family. As to quaternary structure, component of complex II composed of four subunits: a flavoprotein (FP), an iron-sulfur protein (IP), and a cytochrome b composed of a large and a small subunit. [2Fe-2S] cluster is required as a cofactor. It depends on [3Fe-4S] cluster as a cofactor. Requires [4Fe-4S] cluster as cofactor. In terms of tissue distribution, most abundant in the adult thorax and low in abdominal tissues.

It localises to the mitochondrion inner membrane. The enzyme catalyses a quinone + succinate = fumarate + a quinol. It functions in the pathway carbohydrate metabolism; tricarboxylic acid cycle; fumarate from succinate (eukaryal route): step 1/1. In terms of biological role, iron-sulfur protein (IP) subunit of succinate dehydrogenase (SDH) that is involved in complex II of the mitochondrial electron transport chain and is responsible for transferring electrons from succinate to ubiquinone (coenzyme Q). The sequence is that of Succinate dehydrogenase [ubiquinone] iron-sulfur subunit, mitochondrial (SdhB) from Drosophila melanogaster (Fruit fly).